The sequence spans 253 residues: Imidazole glycerol phosphate synthase subunit HisF (253 aa).

Active-site residues include Asp-11 and Asp-130.

The protein belongs to the HisA/HisF family. In terms of assembly, heterodimer of HisH and HisF.

It is found in the cytoplasm. The catalysed reaction is 5-[(5-phospho-1-deoxy-D-ribulos-1-ylimino)methylamino]-1-(5-phospho-beta-D-ribosyl)imidazole-4-carboxamide + L-glutamine = D-erythro-1-(imidazol-4-yl)glycerol 3-phosphate + 5-amino-1-(5-phospho-beta-D-ribosyl)imidazole-4-carboxamide + L-glutamate + H(+). Its pathway is amino-acid biosynthesis; L-histidine biosynthesis; L-histidine from 5-phospho-alpha-D-ribose 1-diphosphate: step 5/9. Functionally, IGPS catalyzes the conversion of PRFAR and glutamine to IGP, AICAR and glutamate. The HisF subunit catalyzes the cyclization activity that produces IGP and AICAR from PRFAR using the ammonia provided by the HisH subunit. In Thermoanaerobacter sp. (strain X514), this protein is Imidazole glycerol phosphate synthase subunit HisF.